We begin with the raw amino-acid sequence, 355 residues long: Protein-glutamate methylesterase/protein-glutamine glutaminase (355 aa).

The Response regulatory domain occupies 3-121 (NVLVVEDSPV…HPDHEATARK (119 aa)). Aspartate 54 carries the post-translational modification 4-aspartylphosphate. Positions 154 to 348 (PLLNRVAPAR…AALTNLVAER (195 aa)) constitute a CheB-type methylesterase domain. Active-site residues include serine 170, histidine 197, and aspartate 290.

Belongs to the CheB family. Post-translationally, phosphorylated by CheA. Phosphorylation of the N-terminal regulatory domain activates the methylesterase activity.

The protein localises to the cytoplasm. The enzyme catalyses [protein]-L-glutamate 5-O-methyl ester + H2O = L-glutamyl-[protein] + methanol + H(+). It catalyses the reaction L-glutaminyl-[protein] + H2O = L-glutamyl-[protein] + NH4(+). In terms of biological role, involved in chemotaxis. Part of a chemotaxis signal transduction system that modulates chemotaxis in response to various stimuli. Catalyzes the demethylation of specific methylglutamate residues introduced into the chemoreceptors (methyl-accepting chemotaxis proteins or MCP) by CheR. Also mediates the irreversible deamidation of specific glutamine residues to glutamic acid. The polypeptide is Protein-glutamate methylesterase/protein-glutamine glutaminase (Nitrosospira multiformis (strain ATCC 25196 / NCIMB 11849 / C 71)).